The following is a 404-amino-acid chain: NADH-quinone oxidoreductase subunit D 1 (404 aa).

The protein belongs to the complex I 49 kDa subunit family. NDH-1 is composed of 14 different subunits. Subunits NuoB, C, D, E, F, and G constitute the peripheral sector of the complex.

Its subcellular location is the cell inner membrane. It carries out the reaction a quinone + NADH + 5 H(+)(in) = a quinol + NAD(+) + 4 H(+)(out). In terms of biological role, NDH-1 shuttles electrons from NADH, via FMN and iron-sulfur (Fe-S) centers, to quinones in the respiratory chain. The immediate electron acceptor for the enzyme in this species is believed to be ubiquinone. Couples the redox reaction to proton translocation (for every two electrons transferred, four hydrogen ions are translocated across the cytoplasmic membrane), and thus conserves the redox energy in a proton gradient. The polypeptide is NADH-quinone oxidoreductase subunit D 1 (Sorangium cellulosum (strain So ce56) (Polyangium cellulosum (strain So ce56))).